The primary structure comprises 431 residues: Glutamate-1-semialdehyde 2,1-aminomutase (431 aa).

At Lys-269 the chain carries N6-(pyridoxal phosphate)lysine.

This sequence belongs to the class-III pyridoxal-phosphate-dependent aminotransferase family. HemL subfamily. In terms of assembly, homodimer. The cofactor is pyridoxal 5'-phosphate.

It localises to the cytoplasm. The catalysed reaction is (S)-4-amino-5-oxopentanoate = 5-aminolevulinate. It functions in the pathway porphyrin-containing compound metabolism; protoporphyrin-IX biosynthesis; 5-aminolevulinate from L-glutamyl-tRNA(Glu): step 2/2. The protein operates within porphyrin-containing compound metabolism; chlorophyll biosynthesis. This Chlorobium phaeovibrioides (strain DSM 265 / 1930) (Prosthecochloris vibrioformis (strain DSM 265)) protein is Glutamate-1-semialdehyde 2,1-aminomutase.